Reading from the N-terminus, the 223-residue chain is Peptidyl-tRNA hydrolase (223 aa).

Tyr-16 provides a ligand contact to tRNA. His-21 functions as the Proton acceptor in the catalytic mechanism. TRNA contacts are provided by Phe-67, Asn-69, and Asn-113.

It belongs to the PTH family. Monomer.

It localises to the cytoplasm. The enzyme catalyses an N-acyl-L-alpha-aminoacyl-tRNA + H2O = an N-acyl-L-amino acid + a tRNA + H(+). Functionally, hydrolyzes ribosome-free peptidyl-tRNAs (with 1 or more amino acids incorporated), which drop off the ribosome during protein synthesis, or as a result of ribosome stalling. Catalyzes the release of premature peptidyl moieties from peptidyl-tRNA molecules trapped in stalled 50S ribosomal subunits, and thus maintains levels of free tRNAs and 50S ribosomes. The sequence is that of Peptidyl-tRNA hydrolase from Helicobacter hepaticus (strain ATCC 51449 / 3B1).